Reading from the N-terminus, the 207-residue chain is Large ribosomal subunit protein uL4 (207 aa).

The interval 49 to 78 (HAVKNRSAVSGGGRKPWRQKGTGRARQGSI) is disordered.

It belongs to the universal ribosomal protein uL4 family. As to quaternary structure, part of the 50S ribosomal subunit.

One of the primary rRNA binding proteins, this protein initially binds near the 5'-end of the 23S rRNA. It is important during the early stages of 50S assembly. It makes multiple contacts with different domains of the 23S rRNA in the assembled 50S subunit and ribosome. Its function is as follows. Forms part of the polypeptide exit tunnel. This is Large ribosomal subunit protein uL4 from Streptococcus agalactiae serotype Ia (strain ATCC 27591 / A909 / CDC SS700).